The chain runs to 177 residues: Large ribosomal subunit protein uL6 (177 aa).

It belongs to the universal ribosomal protein uL6 family. As to quaternary structure, part of the 50S ribosomal subunit.

This protein binds to the 23S rRNA, and is important in its secondary structure. It is located near the subunit interface in the base of the L7/L12 stalk, and near the tRNA binding site of the peptidyltransferase center. The polypeptide is Large ribosomal subunit protein uL6 (Micrococcus luteus (strain ATCC 4698 / DSM 20030 / JCM 1464 / CCM 169 / CCUG 5858 / IAM 1056 / NBRC 3333 / NCIMB 9278 / NCTC 2665 / VKM Ac-2230) (Micrococcus lysodeikticus)).